A 496-amino-acid polypeptide reads, in one-letter code: Glycylpeptide N-tetradecanoyltransferase 1 (496 aa).

Positions 1 to 82 are disordered; it reads MADESETAVK…SAQDQPVKMN (82 aa). A phosphoserine mark is found at S31 and S47. A compositionally biased stretch (basic residues) spans 55 to 66; it reads KKKKKKQKKKKE. Position 83 is a phosphoserine (S83). Tetradecanoyl-CoA-binding residues include Q118, F119, W120, F247, L248, C249, V250, S256, R258, V259, and A260.

Belongs to the NMT family.

The protein localises to the cytoplasm. It is found in the cytosol. Its subcellular location is the membrane. It catalyses the reaction N-terminal glycyl-[protein] + tetradecanoyl-CoA = N-tetradecanoylglycyl-[protein] + CoA + H(+). The enzyme catalyses N-terminal glycyl-L-lysyl-[protein] + tetradecanoyl-CoA = N-terminal glycyl-(N(6)-tetradecanoyl)-L-lysyl-[protein] + CoA + H(+). Its function is as follows. Adds a myristoyl group to the N-terminal glycine residue of certain cellular and viral proteins. Also able to mediate N-terminal lysine myristoylation of proteins: catalyzes myristoylation of ARF6 on both 'Gly-2' and 'Lys-3'. Lysine myristoylation is required to maintain ARF6 on membranes during the GTPase cycle. In Pongo abelii (Sumatran orangutan), this protein is Glycylpeptide N-tetradecanoyltransferase 1 (NMT1).